The sequence spans 314 residues: Methionyl-tRNA formyltransferase (314 aa).

110–113 (SLLP) is a (6S)-5,6,7,8-tetrahydrofolate binding site.

It belongs to the Fmt family.

It catalyses the reaction L-methionyl-tRNA(fMet) + (6R)-10-formyltetrahydrofolate = N-formyl-L-methionyl-tRNA(fMet) + (6S)-5,6,7,8-tetrahydrofolate + H(+). Its function is as follows. Attaches a formyl group to the free amino group of methionyl-tRNA(fMet). The formyl group appears to play a dual role in the initiator identity of N-formylmethionyl-tRNA by promoting its recognition by IF2 and preventing the misappropriation of this tRNA by the elongation apparatus. This Lactobacillus gasseri (strain ATCC 33323 / DSM 20243 / BCRC 14619 / CIP 102991 / JCM 1131 / KCTC 3163 / NCIMB 11718 / NCTC 13722 / AM63) protein is Methionyl-tRNA formyltransferase.